The chain runs to 68 residues: Sec-independent protein translocase protein TatA (68 aa).

The helical transmembrane segment at 1 to 21 (MGSFSIWHWLIVLAVVLLLFG) threads the bilayer. A disordered region spans residues 42–68 (GMGDDEVASADKSVDGKTVDHKSDEVR). Over residues 53–68 (KSVDGKTVDHKSDEVR) the composition is skewed to basic and acidic residues.

Belongs to the TatA/E family. The Tat system comprises two distinct complexes: a TatABC complex, containing multiple copies of TatA, TatB and TatC subunits, and a separate TatA complex, containing only TatA subunits. Substrates initially bind to the TatABC complex, which probably triggers association of the separate TatA complex to form the active translocon.

Its subcellular location is the cell inner membrane. In terms of biological role, part of the twin-arginine translocation (Tat) system that transports large folded proteins containing a characteristic twin-arginine motif in their signal peptide across membranes. TatA could form the protein-conducting channel of the Tat system. This Rhizobium meliloti (strain 1021) (Ensifer meliloti) protein is Sec-independent protein translocase protein TatA.